Here is a 337-residue protein sequence, read N- to C-terminus: GTP 3',8-cyclase (337 aa).

A Radical SAM core domain is found at 17-243; that stretch reads PFQRQYYYLR…HKSHTDGPAK (227 aa). Arg-26 lines the GTP pocket. Cys-33 and Cys-37 together coordinate [4Fe-4S] cluster. Position 39 (Tyr-39) interacts with S-adenosyl-L-methionine. Position 40 (Cys-40) interacts with [4Fe-4S] cluster. Arg-76 is a binding site for GTP. An S-adenosyl-L-methionine-binding site is contributed by Gly-80. Thr-107 contributes to the GTP binding site. Ser-131 contributes to the S-adenosyl-L-methionine binding site. Lys-168 provides a ligand contact to GTP. Met-202 lines the S-adenosyl-L-methionine pocket. Cys-265 and Cys-268 together coordinate [4Fe-4S] cluster. 270–272 is a GTP binding site; that stretch reads RLR. Position 282 (Cys-282) interacts with [4Fe-4S] cluster.

This sequence belongs to the radical SAM superfamily. MoaA family. As to quaternary structure, monomer and homodimer. [4Fe-4S] cluster is required as a cofactor.

The catalysed reaction is GTP + AH2 + S-adenosyl-L-methionine = (8S)-3',8-cyclo-7,8-dihydroguanosine 5'-triphosphate + 5'-deoxyadenosine + L-methionine + A + H(+). The protein operates within cofactor biosynthesis; molybdopterin biosynthesis. In terms of biological role, catalyzes the cyclization of GTP to (8S)-3',8-cyclo-7,8-dihydroguanosine 5'-triphosphate. The sequence is that of GTP 3',8-cyclase from Haemophilus influenzae (strain ATCC 51907 / DSM 11121 / KW20 / Rd).